The sequence spans 95 residues: MKFLLLVLAALRFLTQVIPASAGGSKCVSNTPGYCRTYCHQGETALFMCNASRKCCVSYSFLPKPDLPQLIGNHWQSRRRNTQRKDKKQQTTVTS.

The N-terminal stretch at 1 to 22 (MKFLLLVLAALRFLTQVIPASA) is a signal peptide. 3 disulfides stabilise this stretch: C27–C55, C35–C49, and C39–C56. The tract at residues 72-95 (GNHWQSRRRNTQRKDKKQQTTVTS) is disordered. Over residues 76-87 (QSRRRNTQRKDK) the composition is skewed to basic residues.

This sequence belongs to the beta-defensin family.

Its subcellular location is the secreted. Has antibacterial activity. The protein is Beta-defensin 132 (DEFB132) of Pongo pygmaeus (Bornean orangutan).